Here is a 160-residue protein sequence, read N- to C-terminus: Transcription elongation factor GreA (160 aa).

The stretch at 2–81 (AEKKNILTYE…KNAEVVVEDE (80 aa)) forms a coiled coil. The segment at 36–55 (KEAREQGDLSENAEYDAAKD) is disordered.

Belongs to the GreA/GreB family.

In terms of biological role, necessary for efficient RNA polymerase transcription elongation past template-encoded arresting sites. The arresting sites in DNA have the property of trapping a certain fraction of elongating RNA polymerases that pass through, resulting in locked ternary complexes. Cleavage of the nascent transcript by cleavage factors such as GreA or GreB allows the resumption of elongation from the new 3'terminus. GreA releases sequences of 2 to 3 nucleotides. The polypeptide is Transcription elongation factor GreA (Lachnoclostridium phytofermentans (strain ATCC 700394 / DSM 18823 / ISDg) (Clostridium phytofermentans)).